A 66-amino-acid polypeptide reads, in one-letter code: Small ribosomal subunit protein bS21 (66 aa).

It belongs to the bacterial ribosomal protein bS21 family.

This chain is Small ribosomal subunit protein bS21, found in Rickettsia peacockii (strain Rustic).